A 644-amino-acid chain; its full sequence is Chaperone protein DnaK (644 aa).

Threonine 199 carries the phosphothreonine; by autocatalysis modification. Positions 602-644 (LYAEQSAQQQGSAGATGGEQPKADKAADDGVVDAEFEEVKDDK) are disordered. Residues 604–614 (AEQSAQQQGSA) show a composition bias toward low complexity. Over residues 631 to 644 (GVVDAEFEEVKDDK) the composition is skewed to acidic residues.

The protein belongs to the heat shock protein 70 family.

Its function is as follows. Acts as a chaperone. In Teredinibacter turnerae (strain ATCC 39867 / T7901), this protein is Chaperone protein DnaK.